The sequence spans 516 residues: High-affinity nitrate transporter 2.3 (516 aa).

12 helical membrane-spanning segments follow: residues Trp52–Ile72, Leu76–Phe96, Leu112–Gln132, Phe142–Phe162, Gly172–Val192, Ile209–Gly229, Trp265–Val285, Thr299–Gly319, Leu335–Ile354, Val367–Val387, Ile395–Phe415, and Gly425–Phe445. Residues Ser489–Val516 form a disordered region.

The protein belongs to the major facilitator superfamily. Nitrate/nitrite porter (TC 2.A.1.8) family. Heterotetramer composed of two NRT2.3 and two NAR2.1. Isoform 1 interacts with NAR2.1, but not isoform 2. Expressed in the stelar cells of both primary and lateral roots, particularly at the site of lateral root emergence, root-shoot junction zone, vascular tissues of adventitious root primordia, leaves, germ tips and seed scutellum.

Its subcellular location is the cell membrane. Functionally, involved in nitrate transport, but does not seem to be able to mediate transport by its own. Acts as a dual component transporter with NAR2.1. Imports nitrate with high affinity when expressed with NAR2.1 in a heterologous system (Xenopus oocytes). Plays a key role in long-distance nitrate transport from root to shoot particularly at low external nitrate supply. This is High-affinity nitrate transporter 2.3 (NRT2.3) from Oryza sativa subsp. japonica (Rice).